The following is a 165-amino-acid chain: Endoribonuclease YbeY (165 aa).

Zn(2+) is bound by residues His130, His134, and His140.

Belongs to the endoribonuclease YbeY family. It depends on Zn(2+) as a cofactor.

The protein localises to the cytoplasm. Its function is as follows. Single strand-specific metallo-endoribonuclease involved in late-stage 70S ribosome quality control and in maturation of the 3' terminus of the 16S rRNA. This Streptococcus thermophilus (strain CNRZ 1066) protein is Endoribonuclease YbeY.